A 289-amino-acid polypeptide reads, in one-letter code: ATP synthase gamma chain (289 aa).

Belongs to the ATPase gamma chain family. As to quaternary structure, F-type ATPases have 2 components, CF(1) - the catalytic core - and CF(0) - the membrane proton channel. CF(1) has five subunits: alpha(3), beta(3), gamma(1), delta(1), epsilon(1). CF(0) has three main subunits: a, b and c.

Its subcellular location is the cell membrane. Functionally, produces ATP from ADP in the presence of a proton gradient across the membrane. The gamma chain is believed to be important in regulating ATPase activity and the flow of protons through the CF(0) complex. The polypeptide is ATP synthase gamma chain (Lactococcus lactis subsp. cremoris (strain SK11)).